The sequence spans 91 residues: Small ribosomal subunit protein uS15 (91 aa).

This sequence belongs to the universal ribosomal protein uS15 family. Part of the 30S ribosomal subunit. Forms a bridge to the 50S subunit in the 70S ribosome, contacting the 23S rRNA.

Functionally, one of the primary rRNA binding proteins, it binds directly to 16S rRNA where it helps nucleate assembly of the platform of the 30S subunit by binding and bridging several RNA helices of the 16S rRNA. Its function is as follows. Forms an intersubunit bridge (bridge B4) with the 23S rRNA of the 50S subunit in the ribosome. This Legionella pneumophila (strain Paris) protein is Small ribosomal subunit protein uS15.